Consider the following 274-residue polypeptide: Diaminopimelate epimerase (274 aa).

The substrate site is built by Asn11, Gln44, and Asn64. Cys73 functions as the Proton donor in the catalytic mechanism. Substrate is bound by residues 74 to 75 (GN), Asn157, Asn190, and 208 to 209 (ER). The active-site Proton acceptor is Cys217. A substrate-binding site is contributed by 218–219 (GT).

The protein belongs to the diaminopimelate epimerase family. Homodimer.

Its subcellular location is the cytoplasm. It catalyses the reaction (2S,6S)-2,6-diaminopimelate = meso-2,6-diaminopimelate. It participates in amino-acid biosynthesis; L-lysine biosynthesis via DAP pathway; DL-2,6-diaminopimelate from LL-2,6-diaminopimelate: step 1/1. In terms of biological role, catalyzes the stereoinversion of LL-2,6-diaminopimelate (L,L-DAP) to meso-diaminopimelate (meso-DAP), a precursor of L-lysine and an essential component of the bacterial peptidoglycan. The protein is Diaminopimelate epimerase of Blochmanniella pennsylvanica (strain BPEN).